A 408-amino-acid chain; its full sequence is Multidrug resistance protein MdtG (408 aa).

The next 11 membrane-spanning stretches (helical) occupy residues 16–36 (LIVAWLGCFLTGAAFSLVMPF), 58–78 (IVFSITFLFSSIASPFWGGLA), 92–112 (LGMGIVMVLMGLAQNIWQFLI), 115–135 (ALLGLLGGFVPNANALIATQV), 146–166 (TLSTGGVSGALLGPMAGGLLA), 173–193 (PVFFITASVLILCFFVTLFCI), 224–244 (LFVTTLIIQVATGSIAPILTL), 256–276 (VAFISGMIASVPGVAALLSAP), 290–310 (ILITALIFSVLLLIPMSYVQT), 319–339 (FLLGAADGALLPAVQTLLVYN), and 378–398 (AVFLVTAGVVLFNAVYSWNSL).

The protein belongs to the major facilitator superfamily. DHA1 family. MdtG (TC 2.A.1.2.20) subfamily.

The protein localises to the cell inner membrane. Its function is as follows. Confers resistance to fosfomycin and deoxycholate. This chain is Multidrug resistance protein MdtG, found in Escherichia coli (strain 55989 / EAEC).